Consider the following 553-residue polypeptide: Hydroxylamine reductase (553 aa).

Positions 3, 6, 18, and 25 each coordinate [2Fe-2S] cluster. Hybrid [4Fe-2O-2S] cluster is bound by residues H252, E276, C320, C408, C436, C461, E495, and K497. A Cysteine persulfide modification is found at C408.

It belongs to the HCP family. The cofactor is [2Fe-2S] cluster. Hybrid [4Fe-2O-2S] cluster is required as a cofactor.

Its subcellular location is the cytoplasm. The enzyme catalyses A + NH4(+) + H2O = hydroxylamine + AH2 + H(+). Catalyzes the reduction of hydroxylamine to form NH(3) and H(2)O. The sequence is that of Hydroxylamine reductase from Vibrio vulnificus (strain YJ016).